Here is a 158-residue protein sequence, read N- to C-terminus: SH3 domain-binding glutamic acid-rich protein homolog (158 aa).

Over residues 40 to 51 (TEPGKESEKELM) the composition is skewed to basic and acidic residues. The tract at residues 40-74 (TEPGKESEKELMQNKSTSNGGTVSDPEPRHPLPPQ) is disordered. Over residues 52–61 (QNKSTSNGGT) the composition is skewed to polar residues. The SH3-binding signature appears at 67–73 (PRHPLPP). Phosphothreonine is present on Thr109. The interval 118-158 (LKQENGDAKKEEAETEAEDKKTEAGDGDVDVKEEAAEKAEV) is disordered.

Belongs to the SH3BGR family.

This Drosophila melanogaster (Fruit fly) protein is SH3 domain-binding glutamic acid-rich protein homolog (Sh3beta).